The primary structure comprises 435 residues: Homoserine dehydrogenase (435 aa).

Threonine 13, valine 14, and lysine 104 together coordinate NADPH. Valine 14 contacts NAD(+). NADP(+) is bound by residues valine 14 and lysine 104. 4 residues coordinate Na(+): glutamate 128, valine 131, glycine 133, and isoleucine 135. Glycine 186 and glutamate 189 together coordinate NADP(+). The L-homoserine site is built by glutamate 189 and aspartate 200. Lysine 204 serves as the catalytic Proton donor. Residue glycine 301 coordinates NADPH. Glycine 301 contributes to the NAD(+) binding site. Glycine 301 contributes to the NADP(+) binding site. Residues 354 to 429 enclose the ACT domain; sequence YLRVQAKDEP…CVEKPITMIR (76 aa).

The protein belongs to the homoserine dehydrogenase family. As to quaternary structure, homotetramer. It depends on a metal cation as a cofactor.

It catalyses the reaction L-homoserine + NAD(+) = L-aspartate 4-semialdehyde + NADH + H(+). It functions in the pathway amino-acid biosynthesis; L-methionine biosynthesis via de novo pathway; L-homoserine from L-aspartate: step 3/3. The protein operates within amino-acid biosynthesis; L-threonine biosynthesis; L-threonine from L-aspartate: step 3/5. With respect to regulation, neither NaCl nor KCl increase the activity. L-threonine and L-serine do not markedly inhibit the oxidation activity. Functionally, catalyzes the conversion of L-aspartate-beta-semialdehyde (L-Asa) to L-homoserine (L-Hse), the third step in the biosynthesis of threonine and methionine from aspartate. Is highly specific for NAD(+), and displays an approximate 479-fold (kcat/Km) preference for NAD(+) over NADP(+). In Neisseria gonorrhoeae (strain ATCC 700825 / FA 1090), this protein is Homoserine dehydrogenase.